The primary structure comprises 779 residues: MVYTPSKGPRTLYDKVFDAHVVHQDENGSFLLYIDRHLVHEVTSPQAFEGLENAGRKVRRVDCTLATVDHNIPTESRKNFKSLDTFIKQTDSRLQVKTLENNVKQFGVPYFGMSDARQGIVHTIGPEEGFTLPGTTVVCGDSHTSTHGAFGSLAFGIGTSEVEHVLATQTIIQAKSKNMRITVNGKLSPGITSKDLILYIIGLIGTAGGTGCVIEFAGEAIEALSMEARMSMCNMAIEAGARAGMIKPDETTFQYTKGRPLAPKGAEWEKAVAYWKTLKTDEGAKFDHEINIEAVDVIPTITWGTSPQDALPITGSVPDPKNVTDPIKKSGMERALAYMGLEPNTPLKSIKVDKVFIGSCTNGRIEDLRSAAAVVRGQKLASNIKLAMVVPGSGLVKKQAEAEGLDKIFQEAGFEWREAGCSICLGMNPDILDAYERCASTSNRNFEGRQGALSRTHLMSPAMAAAAGIAGHFVDIREFEYKDQDQSSPKVEVTSEDEKELESAAYDHAEPVQPEDAPQDIANDELKDIPVKSDDTPAKPSSSGMKPFLTLEGISAPLDKANVDTDAIIPKQFLKTIKRTGLKKGLFYEWRFRKDDQGKDQETDFVLNVEPWREAEILVVTGDNFGCGSSREHAPWALKDFGIKSIIAPSYGDIFYNNSFKNGLLPIRLDQQIIIDKLIPIANKGGKLCVDLPNQKILDSDGNVLVDHFEIEPFRKHCLVNGLDDIGITLQKEEYISRYEALRREKYSFLEGGSKLLKFDNVPKRKAVTTTFDKVHQDW.

[4Fe-4S] cluster contacts are provided by C360, C421, and C424. Residues 484–518 are disordered; the sequence is QDQSSPKVEVTSEDEKELESAAYDHAEPVQPEDAP. S488 is modified (phosphoserine). Position 494 is a phosphothreonine (T494). A Phosphoserine modification is found at S495. Residues 501–510 show a composition bias toward basic and acidic residues; the sequence is LESAAYDHAE.

The protein belongs to the aconitase/IPM isomerase family. In terms of assembly, monomer. It depends on [4Fe-4S] cluster as a cofactor.

The catalysed reaction is (2R,3S)-3-isopropylmalate = (2S)-2-isopropylmalate. It functions in the pathway amino-acid biosynthesis; L-leucine biosynthesis; L-leucine from 3-methyl-2-oxobutanoate: step 2/4. Its function is as follows. Catalyzes the isomerization between 2-isopropylmalate and 3-isopropylmalate, via the formation of 2-isopropylmaleate. This is 3-isopropylmalate dehydratase (LEU1) from Saccharomyces cerevisiae (strain ATCC 204508 / S288c) (Baker's yeast).